The primary structure comprises 176 residues: ATP-dependent protease subunit HslV (176 aa).

The active site involves Thr-2. 3 residues coordinate Na(+): Gly-157, Cys-160, and Thr-163.

Belongs to the peptidase T1B family. HslV subfamily. A double ring-shaped homohexamer of HslV is capped on each side by a ring-shaped HslU homohexamer. The assembly of the HslU/HslV complex is dependent on binding of ATP.

It localises to the cytoplasm. The enzyme catalyses ATP-dependent cleavage of peptide bonds with broad specificity.. With respect to regulation, allosterically activated by HslU binding. Protease subunit of a proteasome-like degradation complex believed to be a general protein degrading machinery. This is ATP-dependent protease subunit HslV from Ectopseudomonas mendocina (strain ymp) (Pseudomonas mendocina).